The following is a 120-amino-acid chain: NAD(P)H-quinone oxidoreductase subunit 3, chloroplastic (120 aa).

The next 3 helical transmembrane spans lie at 7 to 27, 64 to 84, and 88 to 108; these read YDTF…AFSI, MFAL…PWAM, and ILGL…IVGL.

The protein belongs to the complex I subunit 3 family. As to quaternary structure, NDH is composed of at least 16 different subunits, 5 of which are encoded in the nucleus.

It localises to the plastid. Its subcellular location is the chloroplast thylakoid membrane. The catalysed reaction is a plastoquinone + NADH + (n+1) H(+)(in) = a plastoquinol + NAD(+) + n H(+)(out). The enzyme catalyses a plastoquinone + NADPH + (n+1) H(+)(in) = a plastoquinol + NADP(+) + n H(+)(out). NDH shuttles electrons from NAD(P)H:plastoquinone, via FMN and iron-sulfur (Fe-S) centers, to quinones in the photosynthetic chain and possibly in a chloroplast respiratory chain. The immediate electron acceptor for the enzyme in this species is believed to be plastoquinone. Couples the redox reaction to proton translocation, and thus conserves the redox energy in a proton gradient. This Cryptomeria japonica (Japanese cedar) protein is NAD(P)H-quinone oxidoreductase subunit 3, chloroplastic.